The sequence spans 262 residues: Large ribosomal subunit protein bL9m (262 aa).

Residues 1–49 constitute a mitochondrion transit peptide; the sequence is MAASMAPRCSSLLWAGAAWLRQRGIGELLQPRIERSTPGRDFSLSHYQS.

This sequence belongs to the bacterial ribosomal protein bL9 family. In terms of assembly, component of the mitochondrial ribosome large subunit (39S) which comprises a 16S rRNA and about 50 distinct proteins.

It localises to the mitochondrion. The polypeptide is Large ribosomal subunit protein bL9m (Mrpl9) (Rattus norvegicus (Rat)).